A 143-amino-acid chain; its full sequence is Large ribosomal subunit protein uL15 (143 aa).

Belongs to the universal ribosomal protein uL15 family. In terms of assembly, part of the 50S ribosomal subunit.

Its function is as follows. Binds to the 23S rRNA. The protein is Large ribosomal subunit protein uL15 of Methanococcus aeolicus (strain ATCC BAA-1280 / DSM 17508 / OCM 812 / Nankai-3).